Consider the following 453-residue polypeptide: GTPase Der (453 aa).

EngA-type G domains follow at residues 4 to 169 and 177 to 352; these read PIVA…PPVT and IKIA…EEHK. GTP is bound by residues 10 to 17, 57 to 61, 120 to 123, 183 to 190, 230 to 234, and 295 to 298; these read GRPNVGKS, DTGGL, NKCE, DTAGI, and NKWD. In terms of domain architecture, KH-like spans 353–438; that stretch reads RRVSTSVINE…PIRLLWRSKK (86 aa).

Belongs to the TRAFAC class TrmE-Era-EngA-EngB-Septin-like GTPase superfamily. EngA (Der) GTPase family. Associates with the 50S ribosomal subunit.

In terms of biological role, GTPase that plays an essential role in the late steps of ribosome biogenesis. In Nostoc sp. (strain PCC 7120 / SAG 25.82 / UTEX 2576), this protein is GTPase Der.